The following is a 250-amino-acid chain: 3-deoxy-manno-octulosonate cytidylyltransferase (250 aa).

The protein belongs to the KdsB family.

The protein localises to the cytoplasm. It carries out the reaction 3-deoxy-alpha-D-manno-oct-2-ulosonate + CTP = CMP-3-deoxy-beta-D-manno-octulosonate + diphosphate. The protein operates within nucleotide-sugar biosynthesis; CMP-3-deoxy-D-manno-octulosonate biosynthesis; CMP-3-deoxy-D-manno-octulosonate from 3-deoxy-D-manno-octulosonate and CTP: step 1/1. It participates in bacterial outer membrane biogenesis; lipopolysaccharide biosynthesis. In terms of biological role, activates KDO (a required 8-carbon sugar) for incorporation into bacterial lipopolysaccharide in Gram-negative bacteria. The chain is 3-deoxy-manno-octulosonate cytidylyltransferase from Francisella tularensis subsp. tularensis (strain FSC 198).